We begin with the raw amino-acid sequence, 483 residues long: Alginate biosynthesis protein AlgA (483 aa).

This sequence belongs to the mannose-6-phosphate isomerase type 2 family. In terms of assembly, monomer. The cofactor is Co(2+).

The enzyme catalyses D-mannose 6-phosphate = D-fructose 6-phosphate. It carries out the reaction alpha-D-mannose 1-phosphate + GTP + H(+) = GDP-alpha-D-mannose + diphosphate. The protein operates within nucleotide-sugar biosynthesis; GDP-alpha-D-mannose biosynthesis; GDP-alpha-D-mannose from alpha-D-mannose 1-phosphate (GTP route): step 1/1. It participates in nucleotide-sugar biosynthesis; GDP-alpha-D-mannose biosynthesis; alpha-D-mannose 1-phosphate from D-fructose 6-phosphate: step 1/2. Produces a precursor for alginate polymerization. The alginate layer provides a protective barrier against host immune defenses and antibiotics. The chain is Alginate biosynthesis protein AlgA (algA) from Pseudomonas fluorescens.